We begin with the raw amino-acid sequence, 291 residues long: Mitochondrial fission factor (291 aa).

Residues 1–271 lie on the Cytoplasmic side of the membrane; it reads MAEISRIQYE…ENKERAKREM (271 aa). A Phosphothreonine modification is found at T89. The tract at residues 106 to 134 is disordered; it reads LERPLPTPQSEESRAVGRLKRERSMSENA. Phosphoserine is present on residues S129, S131, and S146. Position 149 is a phosphothreonine (T149). Residues S151, S178, S182, and S244 each carry the phosphoserine modification. The stretch at 240-271 forms a coiled coil; that stretch reads VDAASLRRQIIKLNRRLQLLEEENKERAKREM. Residues 272–289 traverse the membrane as a helical; Anchor for type IV membrane protein segment; sequence VMYSITVAFWLLNSWLWF. Residues 290 to 291 lie on the Mitochondrial intermembrane side of the membrane; sequence RR.

Belongs to the Tango11 family. In terms of assembly, homodimer. Interacts with DNM1L. Interacts with C11orf65/MFI; the interaction inhibits MFF interaction with DNM1L.

The protein localises to the mitochondrion outer membrane. The protein resides in the peroxisome. Its subcellular location is the cytoplasmic vesicle. It is found in the secretory vesicle. It localises to the synaptic vesicle. Plays a role in mitochondrial and peroxisomal fission. Promotes the recruitment and association of the fission mediator dynamin-related protein 1 (DNM1L) to the mitochondrial surface. May be involved in regulation of synaptic vesicle membrane dynamics by recruitment of DNM1L to clathrin-containing vesicles. The protein is Mitochondrial fission factor (Mff) of Mus musculus (Mouse).